We begin with the raw amino-acid sequence, 160 residues long: Phosphopantetheine adenylyltransferase (160 aa).

Serine 9 contacts substrate. ATP contacts are provided by residues 9-10 and histidine 17; that span reads SF. 3 residues coordinate substrate: lysine 41, leucine 73, and arginine 87. Residues 88–90, glutamate 98, and 123–129 contribute to the ATP site; these read GLR and YTFLSSS.

Belongs to the bacterial CoaD family. Homohexamer. Requires Mg(2+) as cofactor.

Its subcellular location is the cytoplasm. The catalysed reaction is (R)-4'-phosphopantetheine + ATP + H(+) = 3'-dephospho-CoA + diphosphate. Its pathway is cofactor biosynthesis; coenzyme A biosynthesis; CoA from (R)-pantothenate: step 4/5. Its function is as follows. Reversibly transfers an adenylyl group from ATP to 4'-phosphopantetheine, yielding dephospho-CoA (dPCoA) and pyrophosphate. This Dictyoglomus turgidum (strain DSM 6724 / Z-1310) protein is Phosphopantetheine adenylyltransferase.